A 141-amino-acid chain; its full sequence is Hemoglobin subunit alpha-A/Q/R/T (141 aa).

The Globin domain maps to 1–141 (VLSPADKTNV…VSTVLTSKYR (141 aa)). A Phosphoserine modification is found at S3. N6-succinyllysine is present on K7. A Phosphothreonine modification is found at T8. N6-succinyllysine is present on K11. K16 is modified (N6-acetyllysine; alternate). N6-succinyllysine; alternate is present on K16. A Phosphotyrosine modification is found at Y24. The residue at position 35 (S35) is a Phosphoserine. An N6-succinyllysine modification is found at K40. S49 bears the Phosphoserine mark. Residue H58 participates in O2 binding. H87 is a heme b binding site. At S102 the chain carries Phosphoserine. Phosphothreonine is present on T108. S124 and S131 each carry phosphoserine. A phosphothreonine mark is found at T134 and T137. S138 bears the Phosphoserine mark.

Belongs to the globin family. Heterotetramer of two alpha chains and two beta chains. As to expression, red blood cells.

Functionally, involved in oxygen transport from the lung to the various peripheral tissues. The polypeptide is Hemoglobin subunit alpha-A/Q/R/T (Macaca fascicularis (Crab-eating macaque)).